A 366-amino-acid polypeptide reads, in one-letter code: MKKTALYPCHEQSGAKIIDFGGYLMPVQYAGIIAEHKAVRSAAGLFDVSHMGNFFVKGSRALEFLQFVTTNDLAKVVDGQAQYNLMLYPSGGIVDDLIIYRMSADTFFLIVNASNADKDFAWLQQHIDQFEGVTLEDHTERLSLIALQGPLALSILNRLFPSIDGEALGSFHFCSASFNGFDVIIARTGYTGEKGVEMCVPNEAAIALWEALMAAGAADGIQPIGLGARDTLRLEMGYSLYGHEINQDTNPLEARLKWVVKMDKGHFIGKEACEQAMQHPQRTVIGFSLEGRALPRQGFTLYNSDRQAIGVVCSGTLSPTLQEPVGTCSVLREYGKPGTPILVEVRGAFHAGIIRSLPFVTNTSLA.

The protein belongs to the GcvT family. The glycine cleavage system is composed of four proteins: P, T, L and H.

It catalyses the reaction N(6)-[(R)-S(8)-aminomethyldihydrolipoyl]-L-lysyl-[protein] + (6S)-5,6,7,8-tetrahydrofolate = N(6)-[(R)-dihydrolipoyl]-L-lysyl-[protein] + (6R)-5,10-methylene-5,6,7,8-tetrahydrofolate + NH4(+). Its function is as follows. The glycine cleavage system catalyzes the degradation of glycine. The chain is Aminomethyltransferase from Chlorobium chlorochromatii (strain CaD3).